Reading from the N-terminus, the 150-residue chain is 1,4-dihydroxy-2-naphthoyl-CoA hydrolase (150 aa).

Aspartate 19 is a catalytic residue.

The protein belongs to the 4-hydroxybenzoyl-CoA thioesterase family. DHNA-CoA hydrolase subfamily.

The catalysed reaction is 1,4-dihydroxy-2-naphthoyl-CoA + H2O = 1,4-dihydroxy-2-naphthoate + CoA + H(+). Its pathway is cofactor biosynthesis; phylloquinone biosynthesis. It functions in the pathway quinol/quinone metabolism; 1,4-dihydroxy-2-naphthoate biosynthesis; 1,4-dihydroxy-2-naphthoate from chorismate: step 7/7. Catalyzes the hydrolysis of 1,4-dihydroxy-2-naphthoyl-CoA (DHNA-CoA) to 1,4-dihydroxy-2-naphthoate (DHNA), a reaction involved in phylloquinone (vitamin K1) biosynthesis. This is 1,4-dihydroxy-2-naphthoyl-CoA hydrolase from Prochlorococcus marinus (strain AS9601).